The primary structure comprises 91 residues: Large ribosomal subunit protein uL23 (91 aa).

It belongs to the universal ribosomal protein uL23 family. As to quaternary structure, part of the 50S ribosomal subunit. Contacts protein L29, and trigger factor when it is bound to the ribosome.

In terms of biological role, one of the early assembly proteins it binds 23S rRNA. One of the proteins that surrounds the polypeptide exit tunnel on the outside of the ribosome. Forms the main docking site for trigger factor binding to the ribosome. This is Large ribosomal subunit protein uL23 from Staphylococcus aureus (strain USA300).